The chain runs to 106 residues: Large ribosomal subunit protein P2 (106 aa).

The interval 79–106 (GAGAVAEAKKEEPEEEEADDDMGFGLFD) is disordered. Residues 91–100 (PEEEEADDDM) show a composition bias toward acidic residues.

The protein belongs to the eukaryotic ribosomal protein P1/P2 family. P1 and P2 exist as dimers at the large ribosomal subunit. Phosphorylated.

Its function is as follows. Plays an important role in the elongation step of protein synthesis. The protein is Large ribosomal subunit protein P2 (LIP) of Leishmania infantum.